Here is a 418-residue protein sequence, read N- to C-terminus: Voltage-gated ClC-type chloride channel ClcB (418 aa).

The next 10 helical transmembrane spans lie at 5-25 (LLIATVVGILAAFAVAGFRHA), 54-74 (LLTPALGGLAAGLLLMGWQKF), 146-166 (LWIACGAAAGMAAAYRAPLAG), 168-188 (LFIAEVLFGTMMLASLGPVII), 222-242 (ALIISTGVLAGLCGPLLLTLM), 260-280 (LALGGLIVGLLSLFTPAVWGN), 291-311 (APPLLMIIAGIFLCKLCAVLA), 316-336 (GAPGGVFTPTLFIGLAIGMLY), 352-372 (LLLGLTGMATLLAATTHAPIM), and 380-400 (MTGEYQLLPGLLIACVIASVI).

This sequence belongs to the chloride channel (TC 2.A.49) family. ClcB subfamily.

The protein localises to the cell inner membrane. Its function is as follows. Probably acts as an electrical shunt for an outwardly-directed proton pump that is linked to amino acid decarboxylation, as part of the extreme acid resistance (XAR) response. This chain is Voltage-gated ClC-type chloride channel ClcB, found in Escherichia coli O9:H4 (strain HS).